A 160-amino-acid polypeptide reads, in one-letter code: Dysbindin domain-containing protein 1 (160 aa).

2 disordered regions span residues 1 to 34 (MESPEGAGPGEITKEVKVPQAAPSVPAHETGDTC) and 95 to 160 (ADSD…PKED). Residues Ser3, Ser97, and Ser121 each carry the phosphoserine modification. Residues 127–143 (TRAEQNREKQTPSDPER) are compositionally biased toward basic and acidic residues.

It belongs to the dysbindin family.

This Rattus norvegicus (Rat) protein is Dysbindin domain-containing protein 1 (Dbndd1).